The sequence spans 259 residues: UPF0246 protein NMB0895 (259 aa).

This sequence belongs to the UPF0246 family.

This chain is UPF0246 protein NMB0895, found in Neisseria meningitidis serogroup B (strain ATCC BAA-335 / MC58).